The chain runs to 475 residues: Doublecortin domain-containing protein 2 (475 aa).

2 Doublecortin domains span residues 17-100 and 139-221; these read KSVL…LNYL and CTIF…LPYS. Positions 234 to 475 are disordered; the sequence is YGQKASSLPP…ESNKASSAVA (242 aa). A compositionally biased stretch (polar residues) spans 252 to 272; sequence GSGNYRQSKSTIGSSDNSSPQ. Position 270 is a phosphoserine (S270). A compositionally biased stretch (basic and acidic residues) spans 353–365; it reads EKTSKDANQKDDF. A compositionally biased stretch (acidic residues) spans 407–419; that stretch reads TDEENGEELDQVT. Positions 455-475 are enriched in polar residues; the sequence is TVTSPQENEGNESNKASSAVA.

In terms of assembly, interacts with DVL1, DVL2 and DVL3. As to expression, expressed in hair cells of the inner ear.

It is found in the cell projection. Its subcellular location is the cilium. The protein localises to the cytoplasm. The protein resides in the cytoskeleton. It localises to the cilium axoneme. It is found in the kinocilium. Its function is as follows. Protein that plays a role in the inhibition of canonical Wnt signaling pathway. May be involved in neuronal migration during development of the cerebral neocortex. Involved in the control of ciliogenesis and ciliary length. The chain is Doublecortin domain-containing protein 2 (Dcdc2) from Rattus norvegicus (Rat).